Reading from the N-terminus, the 278-residue chain is tRNA pseudouridine synthase A (278 aa).

The active-site Nucleophile is the D61. Y119 contributes to the substrate binding site.

Belongs to the tRNA pseudouridine synthase TruA family. In terms of assembly, homodimer.

It carries out the reaction uridine(38/39/40) in tRNA = pseudouridine(38/39/40) in tRNA. In terms of biological role, formation of pseudouridine at positions 38, 39 and 40 in the anticodon stem and loop of transfer RNAs. In Oleidesulfovibrio alaskensis (strain ATCC BAA-1058 / DSM 17464 / G20) (Desulfovibrio alaskensis), this protein is tRNA pseudouridine synthase A.